We begin with the raw amino-acid sequence, 122 residues long: MRLTSILVLVIAATFHTTGTALTLTKDSKAGIANGDSPASGDFIDANSARLLRRVEKDKVDYEQDEQRSFGALKDAVKKLNPVTAVKKFFKQRARRKKVIQTARNADDNLAWAMRKVYNEAN.

The signal sequence occupies residues 1-21; the sequence is MRLTSILVLVIAATFHTTGTA. Positions 50 to 68 match the RxLR-dEER motif; that stretch reads RLLRRVEKDKVDYEQDEQR. A TAP1-binding region spans residues 69 to 86; it reads SFGALKDAVKKLNPVTAV. The segment at 87 to 98 is nuclear localization signal (NLS); sequence KKFFKQRARRKK.

This sequence belongs to the RxLR effector family. In terms of assembly, interacts with host acetyl transferase TAP1.

It is found in the secreted. Its subcellular location is the host nucleus. Effector that suppresses plant defense responses during the early stages of pathogen infection. Suppresses cell death induced by effectors and PAMPs in plant hosts. Interacts with host acetyltransferase TAP1 and causes TAP1 relocation into the nucleus where it acetylates histones H2A and H3 during early infection, thereby promoting susceptibility of host plant to P.sojae. This Phytophthora sojae (Soybean stem and root rot agent) protein is RxLR effector protein Avh52.